The primary structure comprises 397 residues: uncharacterized protein (397 aa).

The next 4 helical transmembrane spans lie at 255-275 (LLTY…ICYA), 284-304 (MITF…VLLA), 308-328 (LITA…PLPL), and 370-390 (VLLV…YCLG).

The protein resides in the cell membrane. This is an uncharacterized protein from Methanocaldococcus jannaschii (strain ATCC 43067 / DSM 2661 / JAL-1 / JCM 10045 / NBRC 100440) (Methanococcus jannaschii).